We begin with the raw amino-acid sequence, 241 residues long: Cobalt transport protein CbiM (241 aa).

Residues 1 to 23 (MKKNLTFFMVIALLFTITPNVYA) form the signal peptide. The next 6 membrane-spanning stretches (helical) occupy residues 29-49 (GFLP…FIII), 66-86 (MLLG…IPSV), 98-118 (LSAI…VLIF), 121-141 (ILLA…MGIM), 160-180 (VAVF…TSVQ), and 202-222 (IFSI…VIIF).

It belongs to the CbiM family. Forms an energy-coupling factor (ECF) transporter complex composed of an ATP-binding protein (A component, CbiO), a transmembrane protein (T component, CbiQ) and 2 possible substrate-capture proteins (S components, CbiM and CbiN) of unknown stoichimetry.

It localises to the cell membrane. It functions in the pathway cofactor biosynthesis; adenosylcobalamin biosynthesis. Part of the energy-coupling factor (ECF) transporter complex CbiMNOQ involved in cobalt import. The chain is Cobalt transport protein CbiM from Clostridium tetani (strain Massachusetts / E88).